The primary structure comprises 432 residues: Serine--tRNA ligase (432 aa).

Thr-237 to Glu-239 provides a ligand contact to L-serine. ATP is bound at residue Arg-268–Glu-270. Glu-291 lines the L-serine pocket. Glu-355–Ser-358 contributes to the ATP binding site. Ser-390 is a binding site for L-serine.

The protein belongs to the class-II aminoacyl-tRNA synthetase family. Type-1 seryl-tRNA synthetase subfamily. Homodimer. The tRNA molecule binds across the dimer.

The protein localises to the cytoplasm. The catalysed reaction is tRNA(Ser) + L-serine + ATP = L-seryl-tRNA(Ser) + AMP + diphosphate + H(+). It catalyses the reaction tRNA(Sec) + L-serine + ATP = L-seryl-tRNA(Sec) + AMP + diphosphate + H(+). The protein operates within aminoacyl-tRNA biosynthesis; selenocysteinyl-tRNA(Sec) biosynthesis; L-seryl-tRNA(Sec) from L-serine and tRNA(Sec): step 1/1. Functionally, catalyzes the attachment of serine to tRNA(Ser). Is also able to aminoacylate tRNA(Sec) with serine, to form the misacylated tRNA L-seryl-tRNA(Sec), which will be further converted into selenocysteinyl-tRNA(Sec). The sequence is that of Serine--tRNA ligase from Methylobacillus flagellatus (strain ATCC 51484 / DSM 6875 / VKM B-1610 / KT).